Here is a 258-residue protein sequence, read N- to C-terminus: Probable phthiotriol/phenolphthiotriol dimycocerosates methyltransferase 2 (258 aa).

Belongs to the methyltransferase superfamily. Phthiotriol/phenolphthiotriol dimycocerosates methyltransferase family.

Catalyzes the methylation of the lipid moiety of the intermediate compounds phthiotriol and glycosylated phenolphthiotriol dimycoserosates to form phthiocerol dimycocerosates (DIM A) and glycosylated phenolphthiocerol dimycocerosates (PGL). The protein is Probable phthiotriol/phenolphthiotriol dimycocerosates methyltransferase 2 of Mycobacterium ulcerans (strain Agy99).